A 958-amino-acid chain; its full sequence is Eukaryotic translation initiation factor 3 subunit A (958 aa).

Positions M93 to K123 form a coiled coil. One can recognise a PCI domain in the interval L316 to L513. Coiled-coil stretches lie at residues E548–E696 and L796–S861. Over residues K804 to R859 the composition is skewed to basic and acidic residues. Residues K804–R958 form a disordered region. A compositionally biased stretch (low complexity) spans P877 to P894. Over residues K929–P942 the composition is skewed to basic and acidic residues. A compositionally biased stretch (polar residues) spans G946–R958.

This sequence belongs to the eIF-3 subunit A family. In terms of assembly, component of the eukaryotic translation initiation factor 3 (eIF-3) complex.

The protein resides in the cytoplasm. Functionally, RNA-binding component of the eukaryotic translation initiation factor 3 (eIF-3) complex, which is involved in protein synthesis of a specialized repertoire of mRNAs and, together with other initiation factors, stimulates binding of mRNA and methionyl-tRNAi to the 40S ribosome. The eIF-3 complex specifically targets and initiates translation of a subset of mRNAs involved in cell proliferation. The sequence is that of Eukaryotic translation initiation factor 3 subunit A (TIF3A1) from Nicotiana tabacum (Common tobacco).